The chain runs to 314 residues: Hydroxyethylthiazole kinase (314 aa).

Methionine 70 is a binding site for substrate. Residues arginine 145 and serine 217 each coordinate ATP. Glycine 244 is a substrate binding site.

Belongs to the Thz kinase family. It depends on Mg(2+) as a cofactor.

The catalysed reaction is 5-(2-hydroxyethyl)-4-methylthiazole + ATP = 4-methyl-5-(2-phosphooxyethyl)-thiazole + ADP + H(+). Its pathway is cofactor biosynthesis; thiamine diphosphate biosynthesis; 4-methyl-5-(2-phosphoethyl)-thiazole from 5-(2-hydroxyethyl)-4-methylthiazole: step 1/1. Functionally, catalyzes the phosphorylation of the hydroxyl group of 4-methyl-5-beta-hydroxyethylthiazole (THZ). This Bifidobacterium longum (strain NCC 2705) protein is Hydroxyethylthiazole kinase.